Reading from the N-terminus, the 163-residue chain is NADH-quinone oxidoreductase subunit I (163 aa).

4Fe-4S ferredoxin-type domains follow at residues Leu54–Asp84 and Thr94–Ile123. Cys64, Cys67, Cys70, Cys74, Cys103, Cys106, Cys109, and Cys113 together coordinate [4Fe-4S] cluster.

Belongs to the complex I 23 kDa subunit family. As to quaternary structure, NDH-1 is composed of 14 different subunits. Subunits NuoA, H, J, K, L, M, N constitute the membrane sector of the complex. Requires [4Fe-4S] cluster as cofactor.

The protein localises to the cell inner membrane. It carries out the reaction a quinone + NADH + 5 H(+)(in) = a quinol + NAD(+) + 4 H(+)(out). Functionally, NDH-1 shuttles electrons from NADH, via FMN and iron-sulfur (Fe-S) centers, to quinones in the respiratory chain. The immediate electron acceptor for the enzyme in this species is believed to be ubiquinone. Couples the redox reaction to proton translocation (for every two electrons transferred, four hydrogen ions are translocated across the cytoplasmic membrane), and thus conserves the redox energy in a proton gradient. The chain is NADH-quinone oxidoreductase subunit I from Ralstonia nicotianae (strain ATCC BAA-1114 / GMI1000) (Ralstonia solanacearum).